The chain runs to 209 residues: Small ribosomal subunit protein uS4 (209 aa).

Residues 99-162 form the S4 RNA-binding domain; sequence RRLDNMVYRL…RKNNKIIEAM (64 aa).

It belongs to the universal ribosomal protein uS4 family. Part of the 30S ribosomal subunit. Contacts protein S5. The interaction surface between S4 and S5 is involved in control of translational fidelity.

Functionally, one of the primary rRNA binding proteins, it binds directly to 16S rRNA where it nucleates assembly of the body of the 30S subunit. With S5 and S12 plays an important role in translational accuracy. The chain is Small ribosomal subunit protein uS4 from Syntrophus aciditrophicus (strain SB).